We begin with the raw amino-acid sequence, 144 residues long: MINFNFFMNDVVRQAREEIVSAGYTELTTPEAVEEAFKRNGTTLVMVNSVCGCAGGIARPAAAHSVHYDKRPNHLVTVFAGQDKEATARAREYFEGYPPSSPSFALLKDGKIVTMVERHEIEGHEPMQVIAKLQSYFEENCEEL.

It belongs to the bacilliredoxin family.

This Bacillus thuringiensis subsp. konkukian (strain 97-27) protein is Bacilliredoxin BT9727_3899.